The sequence spans 342 residues: Maltose regulon regulatory protein MalI (342 aa).

The HTH lacI-type domain maps to 7-61; it reads ITIHDVALAAGVSVSTVSLVLSGKGRISTATGERVNAAIEELGFVRNRQASALRG. A DNA-binding region (H-T-H motif) is located at residues 9–28; sequence IHDVALAAGVSVSTVSLVLS.

In terms of biological role, repressor for the malX and malY genes. Also regulates its own expression. Binds maltose as an inducer. The sequence is that of Maltose regulon regulatory protein MalI (malI) from Escherichia coli (strain K12).